The primary structure comprises 148 residues: Receptor activity-modifying protein 1 (148 aa).

A signal peptide spans 1–26 (MVRVLRGLPWRGLWLLLAHQLFLVTA). Disulfide bonds link Cys-27/Cys-82, Cys-40/Cys-72, and Cys-57/Cys-104. The Extracellular segment spans residues 27–118 (CQDAHYGTLM…RALGDPPSTI (92 aa)). The chain crosses the membrane as a helical span at residues 119 to 140 (LCPFVVLPITVTLLVTALVVWR). The Cytoplasmic portion of the chain corresponds to 141 to 148 (SKRAESIV).

Belongs to the RAMP family. Heterodimer of CALCRL and RAMP1; the interaction induces allosteric modulation of CALCRL function and CGRP1/CALCA and CGRP2/CALCB ligand specificity. Heterodimer of CALCR and RAMP1; interaction forms the AMYR1 receptor complex for amylin/IAPP and CGRP1/CALCA ligands.

The protein resides in the cell membrane. Accessory protein that interacts with and modulates the function of G-protein coupled receptors including calcitonin gene-related peptide type 1 receptor (CALCRL) and calcitonin receptor (CALCR). Required for the transport of CALCRL to the plasma membrane. Together with CALCRL, form the receptor complex for the calcitonin gene-related peptides CGRP1/CALCA and CGRP2/CALCB. Together with CALCR, form the AMYR1 receptor complex for amylin/IAPP and CGRP1/CALCA. The polypeptide is Receptor activity-modifying protein 1 (RAMP1) (Cavia porcellus (Guinea pig)).